A 398-amino-acid chain; its full sequence is Subtilisin-like protease CPC735_015300 (398 aa).

An N-terminal signal peptide occupies residues 1 to 19; the sequence is MGFIKTLSLSLAAASAANA. A propeptide spanning residues 20–116 is cleaved from the precursor; that stretch reads AKILSPSRPD…IEHDHVVRLT (97 aa). An Inhibitor I9 domain is found at 35–115; the sequence is QYIVVMKDGV…FIEHDHVVRL (81 aa). Residues 126 to 398 enclose the Peptidase S8 domain; that stretch reads TWGLGRVSHQ…NKLTYNGNGQ (273 aa). Catalysis depends on charge relay system residues D158 and H189. Residue N250 is glycosylated (N-linked (GlcNAc...) asparagine). Residue S344 is the Charge relay system of the active site. N362 carries an N-linked (GlcNAc...) asparagine glycan.

The protein belongs to the peptidase S8 family.

It localises to the secreted. Secreted subtilisin-like serine protease with keratinolytic activity that contributes to pathogenicity. This is Subtilisin-like protease CPC735_015300 from Coccidioides posadasii (strain C735) (Valley fever fungus).